The following is a 390-amino-acid chain: Calcium-binding and spermatid-specific protein 1 (390 aa).

Disordered regions lie at residues M1 to E23, A82 to I109, and T146 to D225. Residues E162 to T174 show a composition bias toward acidic residues. A compositionally biased stretch (low complexity) spans T184–D193. S251 and S267 each carry phosphoserine. Residue T280 is modified to Phosphothreonine; by CK2. S312 bears the Phosphoserine mark. The span at E330–A344 shows a compositional bias: basic and acidic residues. The segment at E330 to M390 is disordered. Phosphoserine occurs at positions 346, 356, 371, and 375. Residues S346–S364 show a composition bias toward polar residues.

In terms of tissue distribution, expressed in seminiferous tubules of the testis in step 10 spermatids (stage X), subsequently increasing to reach maximal levels of step 18 elongated spermatids (stage VI) (at protein level). Strongly expressed in testis. Weakly expressed in olfactory epithelium. Expressed in spermatids of seminiferous tubules at steps 4-14 (stages IV to XIV of the seminiferous epithelium classification).

It is found in the cytoplasm. Its subcellular location is the mitochondrion inner membrane. The protein localises to the cell projection. The protein resides in the cilium. It localises to the flagellum. It is found in the cytoplasmic vesicle. Its subcellular location is the secretory vesicle. The protein localises to the acrosome. In terms of biological role, calcium-binding protein. Essential for maintaining the structural integrity of the sperm flagella. The polypeptide is Calcium-binding and spermatid-specific protein 1 (Cabs1) (Rattus norvegicus (Rat)).